Reading from the N-terminus, the 122-residue chain is Large ribosomal subunit protein uL14 (122 aa).

The protein belongs to the universal ribosomal protein uL14 family. Part of the 50S ribosomal subunit. Forms a cluster with proteins L3 and L19. In the 70S ribosome, L14 and L19 interact and together make contacts with the 16S rRNA in bridges B5 and B8.

In terms of biological role, binds to 23S rRNA. Forms part of two intersubunit bridges in the 70S ribosome. In Streptomyces coelicolor (strain ATCC BAA-471 / A3(2) / M145), this protein is Large ribosomal subunit protein uL14.